Here is a 254-residue protein sequence, read N- to C-terminus: 5-oxoprolinase subunit A 1 (254 aa).

This sequence belongs to the LamB/PxpA family. As to quaternary structure, forms a complex composed of PxpA, PxpB and PxpC.

It carries out the reaction 5-oxo-L-proline + ATP + 2 H2O = L-glutamate + ADP + phosphate + H(+). Its function is as follows. Catalyzes the cleavage of 5-oxoproline to form L-glutamate coupled to the hydrolysis of ATP to ADP and inorganic phosphate. This Burkholderia pseudomallei (strain K96243) protein is 5-oxoprolinase subunit A 1.